The following is a 176-amino-acid chain: Large ribosomal subunit protein uL6 (176 aa).

Belongs to the universal ribosomal protein uL6 family. In terms of assembly, part of the 50S ribosomal subunit.

This protein binds to the 23S rRNA, and is important in its secondary structure. It is located near the subunit interface in the base of the L7/L12 stalk, and near the tRNA binding site of the peptidyltransferase center. This chain is Large ribosomal subunit protein uL6, found in Lacticaseibacillus paracasei (strain ATCC 334 / BCRC 17002 / CCUG 31169 / CIP 107868 / KCTC 3260 / NRRL B-441) (Lactobacillus paracasei).